A 273-amino-acid chain; its full sequence is Sulfur carrier protein FdhD (273 aa).

The Cysteine persulfide intermediate role is filled by C124. 263–268 (FCRQSR) is a Mo-bis(molybdopterin guanine dinucleotide) binding site.

This sequence belongs to the FdhD family.

It localises to the cytoplasm. Required for formate dehydrogenase (FDH) activity. Acts as a sulfur carrier protein that transfers sulfur from IscS to the molybdenum cofactor prior to its insertion into FDH. The polypeptide is Sulfur carrier protein FdhD (Acinetobacter baylyi (strain ATCC 33305 / BD413 / ADP1)).